The sequence spans 130 residues: Small ribosomal subunit protein uS9 (130 aa).

Positions Asp107–Arg130 are disordered. A compositionally biased stretch (basic residues) spans Val116–Arg130.

Belongs to the universal ribosomal protein uS9 family.

The sequence is that of Small ribosomal subunit protein uS9 from Marinomonas sp. (strain MWYL1).